Reading from the N-terminus, the 205-residue chain is Cytochrome c biogenesis ATP-binding export protein CcmA 1 (205 aa).

One can recognise an ABC transporter domain in the interval 2–205 (LEARDLYCER…LALTGGGAGL (204 aa)). Position 34–41 (34–41 (GGNGAGKT)) interacts with ATP.

It belongs to the ABC transporter superfamily. CcmA exporter (TC 3.A.1.107) family. As to quaternary structure, the complex is composed of two ATP-binding proteins (CcmA) and two transmembrane proteins (CcmB).

The protein resides in the cell inner membrane. It carries out the reaction heme b(in) + ATP + H2O = heme b(out) + ADP + phosphate + H(+). Its function is as follows. Part of the ABC transporter complex CcmAB involved in the biogenesis of c-type cytochromes; once thought to export heme, this seems not to be the case, but its exact role is uncertain. Responsible for energy coupling to the transport system. The protein is Cytochrome c biogenesis ATP-binding export protein CcmA 1 of Salmonella typhimurium (strain LT2 / SGSC1412 / ATCC 700720).